We begin with the raw amino-acid sequence, 183 residues long: Beta-defensin 129 (183 aa).

An N-terminal signal peptide occupies residues 1 to 19; sequence MKLLFPVFASLMLQYQVNT. 3 disulfide bridges follow: cysteine 27–cysteine 53, cysteine 34–cysteine 48, and cysteine 38–cysteine 54. Residues 141–183 form a disordered region; that stretch reads TATSTKSNTKESRDSATASPPPAPPPPNILPTPSLELEKAEEQ. A compositionally biased stretch (pro residues) spans 159-170; the sequence is SPPPAPPPPNIL.

This sequence belongs to the beta-defensin family.

It localises to the secreted. In terms of biological role, has antibacterial activity. The polypeptide is Beta-defensin 129 (DEFB129) (Pongo pygmaeus (Bornean orangutan)).